We begin with the raw amino-acid sequence, 249 residues long: INO80 complex subunit 1 (249 aa).

2 C2H2-type zinc fingers span residues 73–100 (YTCE…LRSH) and 106–131 (FICS…RTVH).

As to quaternary structure, component of the INO80 chromatin remodeling complex.

The protein localises to the nucleus. Its subcellular location is the cytoplasm. In terms of biological role, component of the INO80 complex which remodels chromatin by shifting nucleosomes and is involved in DNA repair. The chain is INO80 complex subunit 1 (iec1) from Schizosaccharomyces pombe (strain 972 / ATCC 24843) (Fission yeast).